A 387-amino-acid chain; its full sequence is Alpha-sarcoglycan (387 aa).

Positions 1–24 (MAAAALLWLPLLVGCLAGPGGTEA) are cleaved as a signal peptide. The Extracellular segment spans residues 25 to 290 (QQTTLYPLVG…ATARDFLADA (266 aa)). Asn174 and Asn246 each carry an N-linked (GlcNAc...) asparagine glycan. A helical transmembrane segment spans residues 291–311 (LVTLLVPLLVALLLALLLAYI). The Cytoplasmic segment spans residues 312–387 (MCCRREGRLK…AQVPLILDQH (76 aa)). Position 377 is a phosphoserine (Ser377).

The protein belongs to the sarcoglycan alpha/epsilon family. Cross-link to form 2 major subcomplexes: one consisting of SGCB, SGCD and SGCG and the other consisting of SGCB and SGCD. The association between SGCB and SGCG is particularly strong while SGCA is loosely associated with the other sarcoglycans. Interacts with the syntrophin SNTA1.

It localises to the cell membrane. The protein resides in the sarcolemma. It is found in the cytoplasm. The protein localises to the cytoskeleton. Functionally, component of the sarcoglycan complex, a subcomplex of the dystrophin-glycoprotein complex which forms a link between the F-actin cytoskeleton and the extracellular matrix. This chain is Alpha-sarcoglycan (SGCA), found in Oryctolagus cuniculus (Rabbit).